We begin with the raw amino-acid sequence, 318 residues long: 1-phosphofructokinase (318 aa).

ATP contacts are provided by residues 228–233 (SMGTEG) and 259–260 (GD). Asp260 serves as the catalytic Proton acceptor.

The protein belongs to the carbohydrate kinase PfkB family.

It catalyses the reaction beta-D-fructose 1-phosphate + ATP = beta-D-fructose 1,6-bisphosphate + ADP + H(+). Catalyzes the ATP-dependent phosphorylation of fructose-l-phosphate to fructose-l,6-bisphosphate. The polypeptide is 1-phosphofructokinase (Xanthomonas campestris pv. campestris (strain ATCC 33913 / DSM 3586 / NCPPB 528 / LMG 568 / P 25)).